A 179-amino-acid polypeptide reads, in one-letter code: MIIYLHGFDSNSPGNHEKVLQLQFIDSDVRFINYSTLHPKHDMQHLLKEVHKAIEQSGDPNPLICGVGLGGYWSERIGFLCGIKQVIFNPNLHPELTMQGRIDRPEEYEDISTKCVEKFRAKNQGRCLVILSRQDEIHDNQKTAQELQDYYDIVWDDTQTHKFKKISHHLQAMKAFKAA.

It belongs to the UPF0227 family.

This Vibrio cholerae serotype O1 (strain ATCC 39541 / Classical Ogawa 395 / O395) protein is UPF0227 protein VC0395_A1482/VC395_2007.